A 311-amino-acid polypeptide reads, in one-letter code: Ciliary microtubule inner protein 2B (311 aa).

Disordered regions lie at residues 64-93 (PFPP…LGDP) and 150-183 (QEGR…APFM).

Belongs to the CIMIP2 family. As to expression, expressed in airway epithelial cells.

The protein resides in the cytoplasm. Its subcellular location is the cytoskeleton. It localises to the cilium axoneme. In terms of biological role, microtubule inner protein (MIP) part of the dynein-decorated doublet microtubules (DMTs) in cilia axoneme, which is required for motile cilia beating. The chain is Ciliary microtubule inner protein 2B (cimip2b) from Xenopus laevis (African clawed frog).